A 181-amino-acid polypeptide reads, in one-letter code: Crossover junction endodeoxyribonuclease RuvC (181 aa).

Active-site residues include Asp-7, Glu-67, and Asp-139. Positions 7, 67, and 139 each coordinate Mg(2+).

It belongs to the RuvC family. As to quaternary structure, homodimer which binds Holliday junction (HJ) DNA. The HJ becomes 2-fold symmetrical on binding to RuvC with unstacked arms; it has a different conformation from HJ DNA in complex with RuvA. In the full resolvosome a probable DNA-RuvA(4)-RuvB(12)-RuvC(2) complex forms which resolves the HJ. The cofactor is Mg(2+).

The protein localises to the cytoplasm. The catalysed reaction is Endonucleolytic cleavage at a junction such as a reciprocal single-stranded crossover between two homologous DNA duplexes (Holliday junction).. Its function is as follows. The RuvA-RuvB-RuvC complex processes Holliday junction (HJ) DNA during genetic recombination and DNA repair. Endonuclease that resolves HJ intermediates. Cleaves cruciform DNA by making single-stranded nicks across the HJ at symmetrical positions within the homologous arms, yielding a 5'-phosphate and a 3'-hydroxyl group; requires a central core of homology in the junction. The consensus cleavage sequence is 5'-(A/T)TT(C/G)-3'. Cleavage occurs on the 3'-side of the TT dinucleotide at the point of strand exchange. HJ branch migration catalyzed by RuvA-RuvB allows RuvC to scan DNA until it finds its consensus sequence, where it cleaves and resolves the cruciform DNA. This Cupriavidus metallidurans (strain ATCC 43123 / DSM 2839 / NBRC 102507 / CH34) (Ralstonia metallidurans) protein is Crossover junction endodeoxyribonuclease RuvC.